The sequence spans 150 residues: Deoxyuridine 5'-triphosphate nucleotidohydrolase (150 aa).

Residues Arg69–Gly71, Asn82, Leu86–Asp88, and Lys96 contribute to the substrate site.

This sequence belongs to the dUTPase family. Mg(2+) serves as cofactor.

It carries out the reaction dUTP + H2O = dUMP + diphosphate + H(+). It participates in pyrimidine metabolism; dUMP biosynthesis; dUMP from dCTP (dUTP route): step 2/2. This enzyme is involved in nucleotide metabolism: it produces dUMP, the immediate precursor of thymidine nucleotides and it decreases the intracellular concentration of dUTP so that uracil cannot be incorporated into DNA. The polypeptide is Deoxyuridine 5'-triphosphate nucleotidohydrolase (Neisseria meningitidis serogroup B (strain ATCC BAA-335 / MC58)).